The following is a 202-amino-acid chain: dTTP/UTP pyrophosphatase (202 aa).

Asp80 (proton acceptor) is an active-site residue.

The protein belongs to the Maf family. YhdE subfamily. Requires a divalent metal cation as cofactor.

It localises to the cytoplasm. It catalyses the reaction dTTP + H2O = dTMP + diphosphate + H(+). The catalysed reaction is UTP + H2O = UMP + diphosphate + H(+). Nucleoside triphosphate pyrophosphatase that hydrolyzes dTTP and UTP. May have a dual role in cell division arrest and in preventing the incorporation of modified nucleotides into cellular nucleic acids. In Alkalilimnicola ehrlichii (strain ATCC BAA-1101 / DSM 17681 / MLHE-1), this protein is dTTP/UTP pyrophosphatase.